A 150-amino-acid polypeptide reads, in one-letter code: Ribonuclease pancreatic (150 aa).

Residues methionine 1–glycine 26 form the signal peptide. Lysine 27 and lysine 33 each carry an N-linked (Glc) (glycation) lysine; in vitro glycan. The substrate site is built by lysine 33 and arginine 36. The active-site Proton acceptor is histidine 38. Cystine bridges form between cysteine 52–cysteine 110, cysteine 66–cysteine 121, cysteine 84–cysteine 136, and cysteine 91–cysteine 98. Residue asparagine 60 is glycosylated (N-linked (GlcNAc...) asparagine; partial). N-linked (Glc) (glycation) lysine; in vitro glycans are attached at residues lysine 63 and lysine 67. Substrate-binding positions include lysine 67–threonine 71, lysine 92, and arginine 111. The active-site Proton donor is the histidine 145.

It belongs to the pancreatic ribonuclease family. In terms of assembly, interacts with and forms tight 1:1 complexes with RNH1. Dimerization of two such complexes may occur. Interaction with RNH1 inhibits this protein. Monomer. Pancreas.

The protein resides in the secreted. It carries out the reaction an [RNA] containing cytidine + H2O = an [RNA]-3'-cytidine-3'-phosphate + a 5'-hydroxy-ribonucleotide-3'-[RNA].. The catalysed reaction is an [RNA] containing uridine + H2O = an [RNA]-3'-uridine-3'-phosphate + a 5'-hydroxy-ribonucleotide-3'-[RNA].. In terms of biological role, endonuclease that catalyzes the cleavage of RNA on the 3' side of pyrimidine nucleotides. Acts on single-stranded and double-stranded RNA. This is Ribonuclease pancreatic (RNASE1) from Bos taurus (Bovine).